The following is a 106-amino-acid chain: Large ribosomal subunit protein uL23 (106 aa).

The protein belongs to the universal ribosomal protein uL23 family. As to quaternary structure, part of the 50S ribosomal subunit. Contacts protein L29, and trigger factor when it is bound to the ribosome.

One of the early assembly proteins it binds 23S rRNA. One of the proteins that surrounds the polypeptide exit tunnel on the outside of the ribosome. Forms the main docking site for trigger factor binding to the ribosome. The polypeptide is Large ribosomal subunit protein uL23 (Acinetobacter baumannii (strain AB307-0294)).